Consider the following 122-residue polypeptide: Large ribosomal subunit protein uL14 (122 aa).

This sequence belongs to the universal ribosomal protein uL14 family. As to quaternary structure, part of the 50S ribosomal subunit. Forms a cluster with proteins L3 and L19. In the 70S ribosome, L14 and L19 interact and together make contacts with the 16S rRNA in bridges B5 and B8.

Binds to 23S rRNA. Forms part of two intersubunit bridges in the 70S ribosome. This chain is Large ribosomal subunit protein uL14, found in Agathobacter rectalis (strain ATCC 33656 / DSM 3377 / JCM 17463 / KCTC 5835 / VPI 0990) (Eubacterium rectale).